We begin with the raw amino-acid sequence, 488 residues long: UDP-N-acetylmuramate--L-alanine ligase (488 aa).

127-133 (GTHGKTT) contacts ATP.

This sequence belongs to the MurCDEF family.

The protein localises to the cytoplasm. The catalysed reaction is UDP-N-acetyl-alpha-D-muramate + L-alanine + ATP = UDP-N-acetyl-alpha-D-muramoyl-L-alanine + ADP + phosphate + H(+). Its pathway is cell wall biogenesis; peptidoglycan biosynthesis. Functionally, cell wall formation. This Shewanella sp. (strain MR-4) protein is UDP-N-acetylmuramate--L-alanine ligase.